The sequence spans 880 residues: Endoglucanase E-4 (880 aa).

The N-terminal stretch at 1–46 (MSVTEPPPRRRGRHSRARRFLTSLGATAALTAGMLGVPLATGTAHA) is a signal peptide. Asp-104 serves as the catalytic Nucleophile. Active-site residues include His-422, His-427, Asp-461, and Glu-470. Residues 504–652 (PDGPEIFVEA…GVPVWGTAPE (149 aa)) enclose the CBM3 domain. The disordered stretch occupies residues 647 to 688 (WGTAPEEGEEPGGGEGPGGGEEPGEDVTPPSAPGSPAVRDVT). In terms of domain architecture, Fibronectin type-III spans 678-770 (APGSPAVRDV…TVSFTTLAEN (93 aa)). The CBM2 domain occupies 771-880 (GGGPDASCTV…TLNGEPCALA (110 aa)).

The protein belongs to the glycosyl hydrolase 9 (cellulase E) family.

The enzyme catalyses Endohydrolysis of (1-&gt;4)-beta-D-glucosidic linkages in cellulose, lichenin and cereal beta-D-glucans.. It functions in the pathway glycan metabolism; cellulose degradation. In Thermobifida fusca (Thermomonospora fusca), this protein is Endoglucanase E-4 (celD).